The chain runs to 619 residues: MITWHDLYTVLTAVIPLYVAMILAYGSVRWWKIFSPDQCSGINRFVAIFAVPLLSFHFISSNNPYAMNLRFIAADTLQKLIMLTLLIIWANFTRSGSLEWSITIFSLSTLPNTLVMGIPLLIAMYGEYSGSLMVQIVVLQCIIWYTLLLFLFEYRGAKILIMEQFPETGASIVSFKVESDVVSLDGHDFLETDAQIGDDGKLHVTVRKSNASRRSFYGGGGTNMTPRPSNLTGAEIYSLNTTPRGSNFNHSDFYSMMGFPGGRLSNFGPADMYSVQSSRGPTPRPSNFEESCAMASSPRFGYYPGGAPGSYPAPNPEFSTGNKTGSKAPKENHHHVGKSNSNDAKELHMFVWGSNGSPVSDRAGLQVDNGANEQVGKSDQGGAKEIRMLISDHTQNGENKAGPMNGDYGGEEESERVKEVPNGLHKLRCNSTAELNPKEAIETGETVPVKHMPPASVMTRLILIMVWRKLIRNPNTYSSLIGLIWALVAFRWDVAMPKIIQQSISILSDAGLGMAMFSLGLFMALQPKLIACGNSTATFAMAVRFFTGPAVMAVAAMAIGLRGDLLRVAIVQAALPQGIVPFVFAKEYNVHPAILSTGVIFGMLIALPITLVYYILLGL.

Residues 1–7 lie on the Extracellular side of the membrane; that stretch reads MITWHDL. Residues 8–28 traverse the membrane as a helical segment; sequence YTVLTAVIPLYVAMILAYGSV. Over 29-38 the chain is Cytoplasmic; the sequence is RWWKIFSPDQ. The helical transmembrane segment at 39–59 threads the bilayer; it reads CSGINRFVAIFAVPLLSFHFI. Val51 serves as a coordination point for (indol-3-yl)acetate. The Extracellular segment spans residues 60–71; the sequence is SSNNPYAMNLRF. The helical transmembrane segment at 72–92 threads the bilayer; it reads IAADTLQKLIMLTLLIIWANF. At 93–101 the chain is on the cytoplasmic side; it reads TRSGSLEWS. Residues 102-122 traverse the membrane as a helical segment; that stretch reads ITIFSLSTLPNTLVMGIPLLI. (indol-3-yl)acetate is bound by residues Asn112 and Leu114. At 123–131 the chain is on the extracellular side; the sequence is AMYGEYSGS. The chain crosses the membrane as a helical span at residues 132-152; sequence LMVQIVVLQCIIWYTLLLFLF. Tyr145 lines the (indol-3-yl)acetate pocket. Residues 153–479 are Cytoplasmic-facing; that stretch reads EYRGAKILIM…LIRNPNTYSS (327 aa). A phosphoserine mark is found at Ser229, Ser246, and Ser286. The tract at residues 306–340 is disordered; the sequence is GAPGSYPAPNPEFSTGNKTGSKAPKENHHHVGKSN. Phosphothreonine is present on Thr320. Ser357 carries the post-translational modification Phosphoserine. The tract at residues 393–413 is disordered; it reads HTQNGENKAGPMNGDYGGEEE. Residues 480-500 form a helical membrane-spanning segment; sequence LIGLIWALVAFRWDVAMPKII. Residues 501 to 503 lie on the Extracellular side of the membrane; that stretch reads QQS. Residues 504-524 form a helical membrane-spanning segment; it reads ISILSDAGLGMAMFSLGLFMA. Residues 525-538 are Cytoplasmic-facing; the sequence is LQPKLIACGNSTAT. The chain crosses the membrane as a helical span at residues 539–559; the sequence is FAMAVRFFTGPAVMAVAAMAI. Topologically, residues 560–564 are extracellular; sequence GLRGD. The helical transmembrane segment at 565-585 threads the bilayer; it reads LLRVAIVQAALPQGIVPFVFA. The (indol-3-yl)acetate site is built by Ile579 and Val580. Topologically, residues 586–598 are cytoplasmic; the sequence is KEYNVHPAILSTG. Residues 599 to 619 form a helical membrane-spanning segment; that stretch reads VIFGMLIALPITLVYYILLGL.

This sequence belongs to the auxin efflux carrier (TC 2.A.69.1) family. As to quaternary structure, homodimer.

Its subcellular location is the cell membrane. Functionally, acts as a component of the auxin efflux carrier. Mediates the initial auxin gradient which contributes to the establishment of the apical-basal axis in early embryogenesis. Together with PIN3 and PIN4, involved in the connective auxin transport (CAT) that ensures communication across the shoot system, and modulates strigolactone-mediated shoot branching control. The abcb19 pin3 pin4 pin7 quadruple mutant exhibits an additive phenotype on strigolactone-mediated bud outgrowth responses and shoot branching control. In Arabidopsis thaliana (Mouse-ear cress), this protein is Auxin efflux carrier component 7.